Reading from the N-terminus, the 309-residue chain is UDP-3-O-acyl-N-acetylglucosamine deacetylase (309 aa).

Residues His-78, His-235, and Asp-239 each coordinate Zn(2+). Catalysis depends on His-262, which acts as the Proton donor.

Belongs to the LpxC family. Zn(2+) serves as cofactor.

It catalyses the reaction a UDP-3-O-[(3R)-3-hydroxyacyl]-N-acetyl-alpha-D-glucosamine + H2O = a UDP-3-O-[(3R)-3-hydroxyacyl]-alpha-D-glucosamine + acetate. It participates in glycolipid biosynthesis; lipid IV(A) biosynthesis; lipid IV(A) from (3R)-3-hydroxytetradecanoyl-[acyl-carrier-protein] and UDP-N-acetyl-alpha-D-glucosamine: step 2/6. In terms of biological role, catalyzes the hydrolysis of UDP-3-O-myristoyl-N-acetylglucosamine to form UDP-3-O-myristoylglucosamine and acetate, the committed step in lipid A biosynthesis. This is UDP-3-O-acyl-N-acetylglucosamine deacetylase from Syntrophotalea carbinolica (strain DSM 2380 / NBRC 103641 / GraBd1) (Pelobacter carbinolicus).